A 360-amino-acid polypeptide reads, in one-letter code: DNA replication and repair protein RecF (360 aa).

30–37 provides a ligand contact to ATP; sequence GQNGSGKT.

The protein belongs to the RecF family.

It localises to the cytoplasm. Functionally, the RecF protein is involved in DNA metabolism; it is required for DNA replication and normal SOS inducibility. RecF binds preferentially to single-stranded, linear DNA. It also seems to bind ATP. The polypeptide is DNA replication and repair protein RecF (Shewanella piezotolerans (strain WP3 / JCM 13877)).